The following is a 269-amino-acid chain: UPF0761 membrane protein NTHI0384 (269 aa).

A run of 6 helical transmembrane segments spans residues 32-52 (MLAI…FPVF), 89-109 (MSAV…NNID), 128-148 (FAIY…SIGI), 168-188 (LLSF…YTVV), 203-223 (FLAA…VVTF), and 232-252 (AMAT…VVLV).

This sequence belongs to the UPF0761 family.

Its subcellular location is the cell inner membrane. The polypeptide is UPF0761 membrane protein NTHI0384 (Haemophilus influenzae (strain 86-028NP)).